We begin with the raw amino-acid sequence, 152 residues long: Probable methionine-R-sulfoxide reductase B (152 aa).

Positions 27–151 constitute a MsrB domain; the sequence is QTEWKSVLPN…NSVCMAFEKK (125 aa). Zn(2+) contacts are provided by C66, C69, C116, and C119. The active-site Nucleophile is C140.

Belongs to the MsrB Met sulfoxide reductase family. Requires Zn(2+) as cofactor.

The catalysed reaction is L-methionyl-[protein] + [thioredoxin]-disulfide + H2O = L-methionyl-(R)-S-oxide-[protein] + [thioredoxin]-dithiol. Its function is as follows. Methionine-sulfoxide reductase that specifically reduces methionine (R)-sulfoxide back to methionine. While in many cases, methionine oxidation is the result of random oxidation following oxidative stress, methionine oxidation is also a post-translational modification that takes place on specific residue. In Caenorhabditis elegans, this protein is Probable methionine-R-sulfoxide reductase B.